The sequence spans 430 residues: Adenylosuccinate synthetase (430 aa).

Residues 12 to 18 (GDEGKGK) and 40 to 42 (GHT) contribute to the GTP site. Asp13 acts as the Proton acceptor in catalysis. The Mg(2+) site is built by Asp13 and Gly40. IMP-binding positions include 13–16 (DEGK), 38–41 (NAGH), Thr130, Arg144, Gln224, Thr239, and Arg303. The active-site Proton donor is the His41. Substrate is bound at residue 299-305 (TVTGRKR). GTP-binding positions include Arg305, 331–333 (KLD), and 413–415 (STS).

It belongs to the adenylosuccinate synthetase family. In terms of assembly, homodimer. It depends on Mg(2+) as a cofactor.

It is found in the cytoplasm. It carries out the reaction IMP + L-aspartate + GTP = N(6)-(1,2-dicarboxyethyl)-AMP + GDP + phosphate + 2 H(+). Its pathway is purine metabolism; AMP biosynthesis via de novo pathway; AMP from IMP: step 1/2. Its function is as follows. Plays an important role in the de novo pathway of purine nucleotide biosynthesis. Catalyzes the first committed step in the biosynthesis of AMP from IMP. The protein is Adenylosuccinate synthetase of Paracoccus denitrificans (strain Pd 1222).